The following is a 190-amino-acid chain: Somatotropin (190 aa).

His-19 is a Zn(2+) binding site. Residues Cys-52 and Cys-163 are joined by a disulfide bond. Position 172 (Glu-172) interacts with Zn(2+). Cys-180 and Cys-188 form a disulfide bridge.

This sequence belongs to the somatotropin/prolactin family.

The protein resides in the secreted. Growth hormone plays an important role in growth control and involved in the regulation of several anabolic processes. This chain is Somatotropin (GH), found in Crocodylus novaeguineae (Crocodile).